The following is an 829-amino-acid chain: Periplasmic nitrate reductase (829 aa).

A signal peptide (tat-type signal) is located at residues 1–29; sequence MKMTRRAFVKANAAASAAAVAGVTLPASA. Residues 41 to 97 enclose the 4Fe-4S Mo/W bis-MGD-type domain; sequence IKWDKAPCRFCGTGCSVLVGTQNGRVVATQGDPEAPVNKGLNCIKGYFLSKIMYGKD. The [4Fe-4S] cluster site is built by cysteine 48, cysteine 51, cysteine 55, and cysteine 83. Residues lysine 85, glutamine 152, asparagine 177, cysteine 181, 214 to 221, 245 to 249, 264 to 266, methionine 374, glutamine 378, asparagine 484, 510 to 511, lysine 533, aspartate 560, and 718 to 727 each bind Mo-bis(molybdopterin guanine dinucleotide); these read WGSNMAEM, STYYH, QSD, SD, and TGRVLEHWHT. Phenylalanine 794 is a binding site for substrate. Positions 802 and 819 each coordinate Mo-bis(molybdopterin guanine dinucleotide).

Belongs to the prokaryotic molybdopterin-containing oxidoreductase family. NasA/NapA/NarB subfamily. As to quaternary structure, component of the periplasmic nitrate reductase NapAB complex composed of NapA and NapB. It depends on [4Fe-4S] cluster as a cofactor. Requires Mo-bis(molybdopterin guanine dinucleotide) as cofactor. Post-translationally, predicted to be exported by the Tat system. The position of the signal peptide cleavage has not been experimentally proven.

The protein resides in the periplasm. It catalyses the reaction 2 Fe(II)-[cytochrome] + nitrate + 2 H(+) = 2 Fe(III)-[cytochrome] + nitrite + H2O. Functionally, catalytic subunit of the periplasmic nitrate reductase complex NapAB. Receives electrons from NapB and catalyzes the reduction of nitrate to nitrite. The polypeptide is Periplasmic nitrate reductase (Aliivibrio fischeri (strain MJ11) (Vibrio fischeri)).